A 386-amino-acid polypeptide reads, in one-letter code: L-arabinitol 4-dehydrogenase (386 aa).

Residues Cys55, His80, Glu81, Cys110, Cys113, Cys116, Cys124, and Glu165 each coordinate Zn(2+). NAD(+) is bound by residues 192-193 (PI), Asp213, Arg218, Ile293, and 317-319 (QYR).

This sequence belongs to the zinc-containing alcohol dehydrogenase family. Homotetramer. Zn(2+) is required as a cofactor.

It carries out the reaction L-arabinitol + NAD(+) = L-xylulose + NADH + H(+). It functions in the pathway carbohydrate degradation; L-arabinose degradation via L-arabinitol; D-xylulose 5-phosphate from L-arabinose (fungal route): step 2/5. Catalyzes the NAD-dependent oxidation of L-arabinitol to L-xylulose in the fungal L-arabinose catabolic pathway. L-arabinose catabolism is important for using plant material as a carbon source. Not active with NADP as cosubstrate. This is L-arabinitol 4-dehydrogenase (ladA) from Aspergillus niger (strain ATCC MYA-4892 / CBS 513.88 / FGSC A1513).